The chain runs to 302 residues: Dihydroorotate dehydrogenase B (NAD(+)), catalytic subunit (302 aa).

FMN is bound by residues Ser23 and 47–48; that span reads KG. Substrate is bound by residues Lys47 and 71–75; that span reads NSVGL. FMN contacts are provided by Asn101 and Asn128. Asn128 contacts substrate. Cys131 acts as the Nucleophile in catalysis. The FMN site is built by Lys166 and Ile192. A substrate-binding site is contributed by 193-194; that stretch reads NT. FMN contacts are provided by residues Gly218, 244–245, and 266–267; these read GG and GT.

Belongs to the dihydroorotate dehydrogenase family. Type 1 subfamily. As to quaternary structure, heterotetramer of 2 PyrK and 2 PyrD type B subunits. FMN is required as a cofactor.

It localises to the cytoplasm. It carries out the reaction (S)-dihydroorotate + NAD(+) = orotate + NADH + H(+). It participates in pyrimidine metabolism; UMP biosynthesis via de novo pathway; orotate from (S)-dihydroorotate (NAD(+) route): step 1/1. Catalyzes the conversion of dihydroorotate to orotate with NAD(+) as electron acceptor. This is Dihydroorotate dehydrogenase B (NAD(+)), catalytic subunit (pyrD) from Alkaliphilus oremlandii (strain OhILAs) (Clostridium oremlandii (strain OhILAs)).